The following is a 75-amino-acid chain: Rugosin-LK1 (75 aa).

Residues 1 to 22 (MFTMKKSLLFLFFLGTISLSFC) form the signal peptide. Positions 23–40 (EEERSADEDDEGEMTEEE) are excised as a propeptide.

In terms of tissue distribution, expressed by the skin glands.

The protein resides in the secreted. Its function is as follows. Has antimicrobial activity against Gram-positive bacteria S.aureus ATCC 2592 (MIC=10.0 uM), S.aureus ATCC 43300 (MIC=15.0 uM) and B.subtilis (MIC=40.0 uM), against Gram-negative bacteria E.coli ML-35P (MIC=10.0 uM), P.aeruginosa PA01 (MIC=5.0 uM) and P.aeruginosa ATCC 27853 (MIC=5.0 uM) and against fungus C.albicans ATCC 2002 (MIC=10.0 uM). This is Rugosin-LK1 from Limnonectes kuhlii (Kuhl's Creek frog).